We begin with the raw amino-acid sequence, 433 residues long: MESLNALIQGLGLMHLGAGQAIMLLVSLLLLWLAIAKKFEPLLLLPIGFGGLLSNIPEAGLALTALESLLAHRDPAQLAVIAAKLHCAPDVHAIKAALALALPSVQGQMESLAVDMGYSAGVLAIFYKVAIGSGIAPLVIFMGVGAMTDFGPLLANPRTLLLGAAAQFGIFATVLGALTLNYFGIISFTLPQAAAIGIIGGADGPTAIYLSGKLAPELLGAIAVAAYSYMALVPLIQPPIMKALTTDKERKIRMVQLRTVSKREKILFPAVLLLLVALLLPDAAPLLGMFCFGNLMRESGVVERLSDTVQNALINIVTIFLGLSVGAKLVADKFLQPQTLGILVLGVIAFCVGTAAGVLMAKLMNVFSRHKINPLIGSAGVSAVPMAARVSNKVGLEADGQNFLLMHAMGPNVAGVIGSAIAAGVMLKYVLAM.

A run of 9 helical transmembrane segments spans residues L16 to A36, V122 to M142, T159 to L178, L180 to A202, I222 to L244, I266 to L286, T308 to A327, T339 to A361, and M409 to L431.

This sequence belongs to the GcdB/MmdB/OadB family. In terms of assembly, heterotrimer of an alpha, a beta and a gamma subunit. Na(+) is required as a cofactor. The N-terminus is blocked.

Its subcellular location is the cell membrane. The catalysed reaction is oxaloacetate + 2 Na(+)(in) + H(+) = pyruvate + 2 Na(+)(out) + CO2. Functionally, catalyzes the decarboxylation of oxaloacetate coupled to Na(+) translocation. In Klebsiella pneumoniae, this protein is Oxaloacetate decarboxylase beta chain (oadB).